The sequence spans 351 residues: MTIAVGRAPQRGWFDVLDDWLKRDRFVFVGWSGILLFPTAYLAIGGWLTGTTFVTSWYTHGIASSYLEGCNFLTAAVSTPADAMGHSLLLLWGPEAQGDFVRWCQLGGLWAFVALHGAFALIGFMLRQFEIARLVGIRPYNAIAFSGPIAVFVSVFLMYPLGQSSWFFAPSFGVAAIFRFLLFLQGFHNWTLNPFHMMGVAGILGGALLCAIHGATVENTLFEDGEQANTFKAFEPTQEEETYSMVTANRFWSQIFGIAFSNKRWLHFFMLFVPVMGLWTSSIGIIGLALNLRAYDFVSQEIRAAEDPEFETFYTKNILLNEGLRAWMAPADQPHENFVFPEEVLPRGNAL.

A helical transmembrane segment spans residues 39-59 (TAYLAIGGWLTGTTFVTSWYT). A chlorophyll a-binding site is contributed by H116. A helical transmembrane segment spans residues 123–139 (GFMLRQFEIARLVGIRP). Pheophytin a contacts are provided by Q128 and N141. A helical transmembrane segment spans residues 151 to 164 (VFVSVFLMYPLGQS). H196 serves as a coordination point for chlorophyll a. Residues 206–226 (GALLCAIHGATVENTLFEDGE) traverse the membrane as a helical segment. Positions 213 and 260 each coordinate a plastoquinone. H213 is a Fe cation binding site. Fe cation is bound at residue H267. A helical transmembrane segment spans residues 277–293 (GLWTSSIGIIGLALNLR).

The protein belongs to the reaction center PufL/M/PsbA/D family. As to quaternary structure, PSII is composed of 1 copy each of membrane proteins PsbA, PsbB, PsbC, PsbD, PsbE, PsbF, PsbH, PsbI, PsbJ, PsbK, PsbL, PsbM, PsbT, PsbX, PsbY, PsbZ, Psb30/Ycf12, peripheral proteins PsbO, CyanoQ (PsbQ), PsbU, PsbV and a large number of cofactors. It forms dimeric complexes. The D1/D2 heterodimer binds P680, chlorophylls that are the primary electron donor of PSII, and subsequent electron acceptors. It shares a non-heme iron and each subunit binds pheophytin, quinone, additional chlorophylls, carotenoids and lipids. There is also a Cl(-1) ion associated with D1 and D2, which is required for oxygen evolution. The PSII complex binds additional chlorophylls, carotenoids and specific lipids. is required as a cofactor.

The protein localises to the cellular thylakoid membrane. The catalysed reaction is 2 a plastoquinone + 4 hnu + 2 H2O = 2 a plastoquinol + O2. Photosystem II (PSII) is a light-driven water:plastoquinone oxidoreductase that uses light energy to abstract electrons from H(2)O, generating O(2) and a proton gradient subsequently used for ATP formation. It consists of a core antenna complex that captures photons, and an electron transfer chain that converts photonic excitation into a charge separation. The D1/D2 (PsbA/PsbD) reaction center heterodimer binds P680, the primary electron donor of PSII as well as several subsequent electron acceptors. D2 is needed for assembly of a stable PSII complex. This Synechococcus sp. (strain WH7803) protein is Photosystem II D2 protein.